Consider the following 148-residue polypeptide: NADH-quinone oxidoreductase subunit K 2 (148 aa).

3 consecutive transmembrane segments (helical) span residues 3–23, 28–48, and 64–84; these read LAYPAVLAALLFCVGLYGVLA, ILVLMSVELMLNAVNLNLVAF, and LFTIAIAAAEIGIGLAIVLAV. Positions 96 to 148 are disordered; it reads LRDTAETDAAETLPDDAGTGPSGTDAAPNGDTTTATGRPGDNAGKNKKAEATR.

This sequence belongs to the complex I subunit 4L family. As to quaternary structure, NDH-1 is composed of 14 different subunits. Subunits NuoA, H, J, K, L, M, N constitute the membrane sector of the complex.

It is found in the cell membrane. It carries out the reaction a quinone + NADH + 5 H(+)(in) = a quinol + NAD(+) + 4 H(+)(out). Its function is as follows. NDH-1 shuttles electrons from NADH, via FMN and iron-sulfur (Fe-S) centers, to quinones in the respiratory chain. The immediate electron acceptor for the enzyme in this species is believed to be a menaquinone. Couples the redox reaction to proton translocation (for every two electrons transferred, four hydrogen ions are translocated across the cytoplasmic membrane), and thus conserves the redox energy in a proton gradient. This chain is NADH-quinone oxidoreductase subunit K 2, found in Streptomyces griseus subsp. griseus (strain JCM 4626 / CBS 651.72 / NBRC 13350 / KCC S-0626 / ISP 5235).